Reading from the N-terminus, the 704-residue chain is Elongation factor G (704 aa).

One can recognise a tr-type G domain in the interval 8 to 291 (DRVRNIGIMA…AVIDYLASPV (284 aa)). GTP is bound by residues 17 to 24 (AHIDAGKT), 90 to 94 (DTPGH), and 144 to 147 (NKMD).

It belongs to the TRAFAC class translation factor GTPase superfamily. Classic translation factor GTPase family. EF-G/EF-2 subfamily.

The protein localises to the cytoplasm. In terms of biological role, catalyzes the GTP-dependent ribosomal translocation step during translation elongation. During this step, the ribosome changes from the pre-translocational (PRE) to the post-translocational (POST) state as the newly formed A-site-bound peptidyl-tRNA and P-site-bound deacylated tRNA move to the P and E sites, respectively. Catalyzes the coordinated movement of the two tRNA molecules, the mRNA and conformational changes in the ribosome. In Chlorobaculum tepidum (strain ATCC 49652 / DSM 12025 / NBRC 103806 / TLS) (Chlorobium tepidum), this protein is Elongation factor G.